The primary structure comprises 622 residues: Modification methylase LlaI (622 aa).

This sequence belongs to the N(4)/N(6)-methyltransferase family.

The enzyme catalyses a 2'-deoxyadenosine in DNA + S-adenosyl-L-methionine = an N(6)-methyl-2'-deoxyadenosine in DNA + S-adenosyl-L-homocysteine + H(+). Functionally, an alpha subtype methylase that modifies unknown specific adenine residues, and protects the DNA from cleavage by the LlaI endonuclease. In Lactococcus lactis subsp. lactis (Streptococcus lactis), this protein is Modification methylase LlaI.